A 264-amino-acid chain; its full sequence is 3-methyl-2-oxobutanoate hydroxymethyltransferase (264 aa).

Mg(2+) contacts are provided by Asp45 and Asp84. 3-methyl-2-oxobutanoate-binding positions include 45-46, Asp84, and Lys112; that span reads DS. Glu114 serves as a coordination point for Mg(2+). Residue Glu181 is the Proton acceptor of the active site.

Belongs to the PanB family. As to quaternary structure, homodecamer; pentamer of dimers. It depends on Mg(2+) as a cofactor.

It localises to the cytoplasm. It catalyses the reaction 3-methyl-2-oxobutanoate + (6R)-5,10-methylene-5,6,7,8-tetrahydrofolate + H2O = 2-dehydropantoate + (6S)-5,6,7,8-tetrahydrofolate. It participates in cofactor biosynthesis; (R)-pantothenate biosynthesis; (R)-pantoate from 3-methyl-2-oxobutanoate: step 1/2. Functionally, catalyzes the reversible reaction in which hydroxymethyl group from 5,10-methylenetetrahydrofolate is transferred onto alpha-ketoisovalerate to form ketopantoate. This is 3-methyl-2-oxobutanoate hydroxymethyltransferase from Edwardsiella ictaluri (strain 93-146).